Reading from the N-terminus, the 559-residue chain is Intestinal-type alkaline phosphatase (559 aa).

A signal peptide spans methionine 1 to serine 19. Aspartate 61 is a binding site for Mg(2+). Zn(2+) contacts are provided by aspartate 61 and serine 111. Catalysis depends on serine 111, which acts as the Phosphoserine intermediate. A disulfide bond links cysteine 140 and cysteine 202. Asparagine 141 carries an N-linked (GlcNAc...) asparagine glycan. Mg(2+) is bound at residue serine 174. Position 235 (glutamate 235) interacts with Ca(2+). An N-linked (GlcNAc...) asparagine glycan is attached at asparagine 241. Residues phenylalanine 288, glutamate 289, and aspartate 304 each coordinate Ca(2+). Glutamate 330 lines the Mg(2+) pocket. Zn(2+)-binding residues include aspartate 335, histidine 339, aspartate 376, and histidine 377. An N-linked (GlcNAc...) asparagine glycan is attached at asparagine 426. Histidine 450 contributes to the Zn(2+) binding site. Cysteine 485 and cysteine 492 are disulfide-bonded. A disordered region spans residues proline 496–arginine 531. Residues threonine 503–threonine 524 are compositionally biased toward low complexity. Asparagine 528 is lipidated: GPI-anchor amidated asparagine. A propeptide spans serine 529–serine 559 (removed in mature form).

This sequence belongs to the alkaline phosphatase family. Homodimer. Mg(2+) is required as a cofactor. The cofactor is Zn(2+). Requires Ca(2+) as cofactor. In terms of tissue distribution, intestine and thymus.

Its subcellular location is the cell membrane. The enzyme catalyses a phosphate monoester + H2O = an alcohol + phosphate. In terms of biological role, alkaline phosphatase that can hydrolyze various phosphate compounds. The polypeptide is Intestinal-type alkaline phosphatase (Iap) (Mus musculus (Mouse)).